We begin with the raw amino-acid sequence, 177 residues long: Voltage-dependent L-type calcium channel subunit alpha-1C (177 aa).

A helical membrane pass occupies residues 27–45 (ITFFRLFRVMRLVKLLSRG). The helical transmembrane segment at 64-84 (YVALLIVMLFFIYAVIGMQVF) threads the bilayer. A glycan (N-linked (GlcNAc...) asparagine) is linked at Asn90. Residues 107-125 (AVLLLFRCATGEAWQEIML) constitute an intramembrane region (pore-forming). The Selectivity filter of repeat IV signature appears at 116-119 (TGEA). An intrachain disulfide couples Cys133 to Cys149. Residue Asn141 is glycosylated (N-linked (GlcNAc...) asparagine). Residues 154-177 (AVFYFISFYMLCAFLIIDLFVAVI) traverse the membrane as a helical segment.

It belongs to the calcium channel alpha-1 subunit (TC 1.A.1.11) family. CACNA1C subfamily. As to quaternary structure, component of a calcium channel complex consisting of a pore-forming alpha subunit (CACNA1C) and ancillary beta, gamma and delta subunits. The channel complex contains alpha, beta, gamma and delta subunits in a 1:1:1:1 ratio, i.e. it contains only one of each type of subunit. CACNA1C channel activity is modulated by ancillary subunits, such as CACNB2, CACNB3, CACNA2D1 and CACNA2D4. Post-translationally, phosphorylation by PKA activates the channel.

It localises to the cell membrane. The protein resides in the perikaryon. Its subcellular location is the postsynaptic density membrane. It is found in the cell projection. The protein localises to the dendrite. It localises to the sarcolemma. The protein resides in the T-tubule. The enzyme catalyses Ca(2+)(in) = Ca(2+)(out). With respect to regulation, inhibited by dihydropyridines (DHP), such as isradipine. Channel activity is regulated by Ca(2+) and calmodulin. Functionally, pore-forming, alpha-1C subunit of the voltage-gated calcium channel that gives rise to L-type calcium currents. Mediates influx of calcium ions into the cytoplasm, and thereby triggers calcium release from the sarcoplasm. Plays an important role in excitation-contraction coupling in the heart. Required for normal heart development and normal regulation of heart rhythm. Required for normal contraction of smooth muscle cells in blood vessels and in the intestine. Essential for normal blood pressure regulation via its role in the contraction of arterial smooth muscle cells. Long-lasting (L-type) calcium channels belong to the 'high-voltage activated' (HVA) group. This chain is Voltage-dependent L-type calcium channel subunit alpha-1C (CACNA1C), found in Gallus gallus (Chicken).